A 310-amino-acid chain; its full sequence is tRNA pseudouridine synthase B (310 aa).

Catalysis depends on Asp-49, which acts as the Nucleophile.

The protein belongs to the pseudouridine synthase TruB family. Type 1 subfamily.

It carries out the reaction uridine(55) in tRNA = pseudouridine(55) in tRNA. Responsible for synthesis of pseudouridine from uracil-55 in the psi GC loop of transfer RNAs. This Rhizobium etli (strain ATCC 51251 / DSM 11541 / JCM 21823 / NBRC 15573 / CFN 42) protein is tRNA pseudouridine synthase B.